A 158-amino-acid chain; its full sequence is NAD(P)H-quinone oxidoreductase subunit J, chloroplastic (158 aa).

This sequence belongs to the complex I 30 kDa subunit family. In terms of assembly, NDH is composed of at least 16 different subunits, 5 of which are encoded in the nucleus.

It is found in the plastid. The protein localises to the chloroplast thylakoid membrane. The catalysed reaction is a plastoquinone + NADH + (n+1) H(+)(in) = a plastoquinol + NAD(+) + n H(+)(out). It catalyses the reaction a plastoquinone + NADPH + (n+1) H(+)(in) = a plastoquinol + NADP(+) + n H(+)(out). NDH shuttles electrons from NAD(P)H:plastoquinone, via FMN and iron-sulfur (Fe-S) centers, to quinones in the photosynthetic chain and possibly in a chloroplast respiratory chain. The immediate electron acceptor for the enzyme in this species is believed to be plastoquinone. Couples the redox reaction to proton translocation, and thus conserves the redox energy in a proton gradient. This chain is NAD(P)H-quinone oxidoreductase subunit J, chloroplastic, found in Fagopyrum esculentum subsp. ancestrale (Wild buckwheat).